A 543-amino-acid chain; its full sequence is Heparanase (543 aa).

A signal peptide spans Met1–Ala35. Heparan sulfate group-binding positions include Asp62–Asn64 and Thr97. The propeptide at Ser110–Gln157 is linker peptide. Cys127 and Cys179 are disulfide-bonded. Lys158–Asn162 lines the heparan sulfate group pocket. Residues Asn162, Asn178, Asn200, and Asn217 are each glycosylated (N-linked (GlcNAc...) asparagine). Residue Glu225 is the Proton donor of the active site. Asn238 carries N-linked (GlcNAc...) asparagine glycosylation. Heparan sulfate group-binding positions include Gln270–Lys280, His296, and Arg303. The segment at Glu288–Lys417 is required for heterodimerization with the heparanase 8 kDa subunit. Glu343 (nucleophile) is an active-site residue. Residues Tyr348–Gly350 and Gly389–Tyr391 each bind heparan sulfate group. Cys437 and Cys542 form a disulfide bridge. N-linked (GlcNAc...) asparagine glycosylation occurs at Asn459. A required for transferring proheparanase to the Golgi apparatus, secretion and subsequent enzyme activity and for enhancement of PKB/AKT1 phosphorylation region spans residues Phe527 to Ile543.

The protein belongs to the glycosyl hydrolase 79 family. Heterodimer; heterodimer formation between the 8 kDa and the 50 kDa subunits is required for enzyme activity. Interacts with TF; the interaction, inhibited by heparin, enhances the generation of activated factor X and activates coagulation. Interacts with HRG; the interaction is enhanced at acidic pH, partially inhibits binding of HPSE to cell surface receptors and modulates its enzymatic activity. Interacts with SDC1; the interaction enhances the shedding of SDC1. Interacts with HPSE2. In terms of processing, proteolytically processed. The cleavage of the 65 kDa form leads to the generation of a linker peptide, and 8 kDa and 50 kDa products. The active form, the 8/50 kDa heterodimer, is resistant to degradation. Complete removal of the linker peptide appears to be a prerequisite to the complete activation of the enzyme. N-glycosylated. Glycosylation of the 50 kDa subunit appears to be essential for its solubility. Highly expressed in placenta and spleen and weakly expressed in lymph node, thymus, peripheral blood leukocytes, bone marrow, endothelial cells, fetal liver and tumor tissues. Also expressed in hair follicles, specifically in both Henle's and Huxley's layers of inner the root sheath (IRS) at anagen phase.

The protein resides in the lysosome membrane. It is found in the secreted. Its subcellular location is the nucleus. The catalysed reaction is endohydrolysis of (1-&gt;4)-beta-D-glycosidic bonds of heparan sulfate chains in heparan sulfate proteoglycan.. Its activity is regulated as follows. Inhibited by EDTA, laminarin sulfate and, to a lower extent, by heparin and sulfamin and activated by calcium and magnesium. Functionally, endoglycosidase that cleaves heparan sulfate proteoglycans (HSPGs) into heparan sulfate side chains and core proteoglycans. Participates in extracellular matrix (ECM) degradation and remodeling. Selectively cleaves the linkage between a glucuronic acid unit and an N-sulfo glucosamine unit carrying either a 3-O-sulfo or a 6-O-sulfo group. Can also cleave the linkage between a glucuronic acid unit and an N-sulfo glucosamine unit carrying a 2-O-sulfo group, but not linkages between a glucuronic acid unit and a 2-O-sulfated iduronic acid moiety. It is essentially inactive at neutral pH but becomes active under acidic conditions such as during tumor invasion and in inflammatory processes. Facilitates cell migration associated with metastasis, wound healing and inflammation. Enhances shedding of syndecans, and increases endothelial invasion and angiogenesis in myelomas. Acts as a procoagulant by increasing the generation of activation factor X in the presence of tissue factor and activation factor VII. Increases cell adhesion to the extracellular matrix (ECM), independent of its enzymatic activity. Induces AKT1/PKB phosphorylation via lipid rafts increasing cell mobility and invasion. Heparin increases this AKT1/PKB activation. Regulates osteogenesis. Enhances angiogenesis through up-regulation of SRC-mediated activation of VEGF. Implicated in hair follicle inner root sheath differentiation and hair homeostasis. The polypeptide is Heparanase (HPSE) (Homo sapiens (Human)).